Consider the following 290-residue polypeptide: uncharacterized protein (290 aa).

Disordered regions lie at residues 105 to 156 and 259 to 290; these read LKHK…KLTV and EGAQ…KSKK. The span at 114 to 130 shows a compositional bias: polar residues; it reads KATQQARKRNFISSKSK. 2 stretches are compositionally biased toward basic and acidic residues: residues 143–156 and 261–280; these read RESK…KLTV and AQRD…EPVL.

This is an uncharacterized protein from Homo sapiens (Human).